An 842-amino-acid chain; its full sequence is Protein translocase subunit SecA (842 aa).

ATP-binding positions include Gln-85, 103–107, and Asp-493; that span reads GEGKT. 4 residues coordinate Zn(2+): Cys-825, Cys-827, Cys-836, and His-837.

It belongs to the SecA family. Monomer and homodimer. Part of the essential Sec protein translocation apparatus which comprises SecA, SecYEG and auxiliary proteins SecDF. Other proteins may also be involved. It depends on Zn(2+) as a cofactor.

It is found in the cell membrane. The protein localises to the cytoplasm. The enzyme catalyses ATP + H2O + cellular proteinSide 1 = ADP + phosphate + cellular proteinSide 2.. In terms of biological role, part of the Sec protein translocase complex. Interacts with the SecYEG preprotein conducting channel. Has a central role in coupling the hydrolysis of ATP to the transfer of proteins into and across the cell membrane, serving as an ATP-driven molecular motor driving the stepwise translocation of polypeptide chains across the membrane. The polypeptide is Protein translocase subunit SecA (Streptococcus equi subsp. equi (strain 4047)).